A 139-amino-acid chain; its full sequence is Large ribosomal subunit protein uL16 (139 aa).

Residues 1–16 (MLIPKRTKYRKQHRPD) show a composition bias toward basic residues. The disordered stretch occupies residues 1–23 (MLIPKRTKYRKQHRPDRHGMSKG).

The protein belongs to the universal ribosomal protein uL16 family. Part of the 50S ribosomal subunit.

Its function is as follows. Binds 23S rRNA and is also seen to make contacts with the A and possibly P site tRNAs. This is Large ribosomal subunit protein uL16 from Bifidobacterium animalis subsp. lactis (strain AD011).